Reading from the N-terminus, the 1007-residue chain is MAAAETQSLREQPEMEDANSEKSINEENGEVSEDQSQNKHSRHKKKKHKHRSKHKKHKHSSEEDKDKKHKHKHKHKKHKRKEIIDASDKEGMSPAKRTKLDDLALLEDLEKQRALIKAELDNELMEGKVQSGMGLILQGYESGSEEEGEIHEKARNGNRSSTRSSSTKGKLELVDNKITTKKRSKSRSKERTRHRSDKKKSKGGIEIVKEKTTRSKSKERKKSKSPSKRSKSQDQARKSKSPTLRRRSQEKIGKARSPTDDKVKIEDKSKSKDRKKSPIINESRSRDRGKKSRSPVDLRGKSKDRRSRSKERKSKRSETDKEKKPIKSPSKDASSGKENRSPSRRPGRSPKRRSLSPKPRDKSRRSRSPLLNDRRSKQSKSPSRTLSPGRRAKSRSLERKRREPERRRLSSPRTRPRDDILSRRERSKDASPINRWSPTRRRSRSPIRRRSRSPLRRSRSPRRRSRSPRRRDRGRRSRSRLRRRSRSRGGRRRRSRSKVKEDKFKGSLSEGMKVEQESSSDDNLEDFDVEEEDEEALIEQRRIQRQAIVQKYKYLAEDSNMSVPSEPSSPQSSTRTRSPSPDDILERVAADVKEYERENVDTFEASVKAKHNLMTVEQNNGSSQKKLLAPDMFTESDDMFAAYFDSARLRAAGIGKDFKENPNLRDNWTDAEGYYRVNIGEVLDKRYNVYGYTGQGVFSNVVRARDNARANQEVAVKIIRNNELMQKTGLKELEFLKKLNDADPDDKFHCLRLFRHFYHKQHLCLVFEPLSMNLREVLKKYGKDVGLHIKAVRSYSQQLFLALKLLKRCNILHADIKPDNILVNESKTILKLCDFGSASHVADNDITPYLVSRFYRAPEIIIGKSYDYGIDMWSVGCTLYELYTGKILFPGKTNNHMLKLAMDLKGKMPNKMIRKGVFKDQHFDQNLNFMYIEVDKVTEREKVTVMSTINPTKDLLADLIGCQRLPEDQRKKVHQLKDLLDQILMLDPAKRISINQALQHAFIQEKI.

Polar residues predominate over residues 1-10; it reads MAAAETQSLR. The interval 1 to 99 is disordered; it reads MAAAETQSLR…EGMSPAKRTK (99 aa). The residue at position 2 (alanine 2) is an N-acetylalanine. Phosphoserine is present on residues serine 8, serine 20, serine 23, and serine 32. 2 stretches are compositionally biased toward basic residues: residues 39 to 59 and 67 to 81; these read KHSRHKKKKHKHRSKHKKHKH and KKHKHKHKHKKHKRK. Positions 82–91 are enriched in basic and acidic residues; sequence EIIDASDKEG. Phosphoserine is present on residues serine 87 and serine 93. Lysine 99 bears the N6-acetyllysine; alternate mark. Lysine 99 is covalently cross-linked (Glycyl lysine isopeptide (Lys-Gly) (interchain with G-Cter in SUMO2); alternate). Lysine 111 is covalently cross-linked (Glycyl lysine isopeptide (Lys-Gly) (interchain with G-Cter in SUMO2)). Lysine 117 is covalently cross-linked (Glycyl lysine isopeptide (Lys-Gly) (interchain with G-Cter in SUMO2); alternate). Lysine 117 participates in a covalent cross-link: Glycyl lysine isopeptide (Lys-Gly) (interchain with G-Cter in SUMO1); alternate. Serine 131 carries the post-translational modification Phosphoserine. Tyrosine 140 is subject to Phosphotyrosine. Disordered regions lie at residues 140 to 533 and 559 to 583; these read YESG…EEED and SNMSVPSEPSSPQSSTRTRSPSPDD. Residues serine 142, serine 144, and serine 166 each carry the phosphoserine modification. Low complexity predominate over residues 157–168; it reads GNRSSTRSSSTK. Glycyl lysine isopeptide (Lys-Gly) (interchain with G-Cter in SUMO2) cross-links involve residues lysine 170 and lysine 177. 2 stretches are compositionally biased toward basic residues: residues 179–202 and 214–230; these read TTKKRSKSRSKERTRHRSDKKKSK and RSKSKERKKSKSPSKRS. Phosphoserine occurs at positions 239, 241, 257, 277, 283, 292, and 294. Over residues 247-270 the composition is skewed to basic and acidic residues; that stretch reads RSQEKIGKARSPTDDKVKIEDKSK. Residues 302-315 are compositionally biased toward basic residues; sequence SKDRRSRSKERKSK. Positions 316-325 are enriched in basic and acidic residues; sequence RSETDKEKKP. Phosphoserine is present on residues serine 328, serine 354, serine 356, serine 366, and serine 368. Over residues 342-367 the composition is skewed to basic residues; sequence PSRRPGRSPKRRSLSPKPRDKSRRSR. Threonine 385 bears the Phosphothreonine mark. At serine 387 the chain carries Phosphoserine. Composition is skewed to basic and acidic residues over residues 395–408 and 415–429; these read RSLERKRREPERRR and RPRDDILSRRERSKD. 3 positions are modified to phosphoserine: serine 427, serine 431, and serine 437. The span at 438–497 shows a compositional bias: basic residues; the sequence is PTRRRSRSPIRRRSRSPLRRSRSPRRRSRSPRRRDRGRRSRSRLRRRSRSRGGRRRRSRS. Phosphoserine is present on residues serine 518, serine 519, serine 520, serine 565, serine 569, serine 578, and serine 580. Acidic residues predominate over residues 518 to 533; sequence SSSDDNLEDFDVEEED. Residues 562-581 show a composition bias toward low complexity; that stretch reads SVPSEPSSPQSSTRTRSPSP. Residues lysine 593 and lysine 659 each participate in a glycyl lysine isopeptide (Lys-Gly) (interchain with G-Cter in SUMO2) cross-link. Residues 687–1006 form the Protein kinase domain; sequence YNVYGYTGQG…ALQHAFIQEK (320 aa). ATP is bound by residues 693–701 and lysine 717; that span reads TGQGVFSNV. Lysine 717 carries the N6-acetyllysine modification. The active-site Proton acceptor is aspartate 815. The residue at position 849 (tyrosine 849) is a Phosphotyrosine. The residue at position 852 (serine 852) is a Phosphoserine.

This sequence belongs to the protein kinase superfamily. CMGC Ser/Thr protein kinase family. In terms of assembly, interacts with CLK1 C-terminus. Associates with the U5 snRNP and NCOR1 deacetylase complexes. Identified in the spliceosome C complex. In terms of processing, phosphorylated by CLK1. Autophosphorylated; phosphorylation inhibits interaction with its targets, such as PRPF6 or SMARCA4. Ubiquitous.

The protein localises to the nucleus. It is found in the chromosome. The protein resides in the centromere. Its subcellular location is the kinetochore. The enzyme catalyses L-seryl-[protein] + ATP = O-phospho-L-seryl-[protein] + ADP + H(+). The catalysed reaction is L-threonyl-[protein] + ATP = O-phospho-L-threonyl-[protein] + ADP + H(+). Functionally, serine/threonine kinase involved in spliceosomal assembly as well as mitosis and signaling regulation. Connects chromatin mediated regulation of transcription and pre-mRNA splicing. During spliceosomal assembly, interacts with and phosphorylates PRPF6 and PRPF31, components of the U4/U6-U5 tri-small nuclear ribonucleoprotein (snRNP), to facilitate the formation of the spliceosome B complex. Plays a role in regulating transcription and the spindle assembly checkpoint (SAC). Associates with U5 snRNP and NCOR1 deacetylase complexes which may allow a coordination of pre-mRNA splicing with chromatin remodeling events involved in transcriptional regulation. Associates and probably phosphorylates SMARCA4 and NCOR1. Phosphorylates SRSF1. Associates with kinetochores during mitosis and is necessary for recruitment and maintenance of the checkpoint proteins such as MAD1L1 and MAD12L1 at the kinetochores. Phosphorylates and regulates the activity of the transcription factors such as ELK1 and KLF13. Phosphorylates nuclear YAP1 and WWTR1/TAZ which induces nuclear exclusion and regulates Hippo signaling pathway, involved in tissue growth control. The chain is Serine/threonine-protein kinase PRP4 homolog from Homo sapiens (Human).